A 924-amino-acid polypeptide reads, in one-letter code: Bifunctional glutamine synthetase adenylyltransferase/adenylyl-removing enzyme (924 aa).

Positions M1–V422 are adenylyl removase. The tract at residues S424–E924 is adenylyl transferase.

Belongs to the GlnE family. It depends on Mg(2+) as a cofactor.

The catalysed reaction is [glutamine synthetase]-O(4)-(5'-adenylyl)-L-tyrosine + phosphate = [glutamine synthetase]-L-tyrosine + ADP. It catalyses the reaction [glutamine synthetase]-L-tyrosine + ATP = [glutamine synthetase]-O(4)-(5'-adenylyl)-L-tyrosine + diphosphate. Its function is as follows. Involved in the regulation of glutamine synthetase GlnA, a key enzyme in the process to assimilate ammonia. When cellular nitrogen levels are high, the C-terminal adenylyl transferase (AT) inactivates GlnA by covalent transfer of an adenylyl group from ATP to specific tyrosine residue of GlnA, thus reducing its activity. Conversely, when nitrogen levels are low, the N-terminal adenylyl removase (AR) activates GlnA by removing the adenylyl group by phosphorolysis, increasing its activity. The regulatory region of GlnE binds the signal transduction protein PII (GlnB) which indicates the nitrogen status of the cell. This Acinetobacter baylyi (strain ATCC 33305 / BD413 / ADP1) protein is Bifunctional glutamine synthetase adenylyltransferase/adenylyl-removing enzyme.